The chain runs to 149 residues: Ribonuclease pancreatic (149 aa).

The N-terminal stretch at 1 to 25 (MGLENSLILFSLLVLVLGWVQPSLG) is a signal peptide. A disordered region spans residues 25 to 62 (GKESSPDKFKRQHMDTEGSSKSSPTYCNQMRSPQEMTK). The span at 28–42 (SSPDKFKRQHMDTEG) shows a compositional bias: basic and acidic residues. Substrate is bound by residues lysine 32 and arginine 35. Catalysis depends on histidine 37, which acts as the Proton acceptor. Positions 43-61 (SSKSSPTYCNQMRSPQEMT) are enriched in polar residues. Cystine bridges form between cysteine 51–cysteine 109, cysteine 65–cysteine 120, cysteine 83–cysteine 135, and cysteine 90–cysteine 97. Residues 66 to 70 (KPVNT) and lysine 91 each bind substrate. The Proton donor role is filled by histidine 144.

This sequence belongs to the pancreatic ribonuclease family. Monomer. Interacts with and forms tight 1:1 complexes with RNH1. Dimerization of two such complexes may occur. Interaction with RNH1 inhibits this protein.

It localises to the secreted. It catalyses the reaction an [RNA] containing cytidine + H2O = an [RNA]-3'-cytidine-3'-phosphate + a 5'-hydroxy-ribonucleotide-3'-[RNA].. The catalysed reaction is an [RNA] containing uridine + H2O = an [RNA]-3'-uridine-3'-phosphate + a 5'-hydroxy-ribonucleotide-3'-[RNA].. Its function is as follows. Endonuclease that catalyzes the cleavage of RNA on the 3' side of pyrimidine nucleotides. Acts on single-stranded and double-stranded RNA. In Sundamys muelleri (Mueller's giant sunda rat), this protein is Ribonuclease pancreatic (RNASE1).